A 284-amino-acid polypeptide reads, in one-letter code: RNase adapter protein RapZ (284 aa).

8–15 (GRSGSGKS) provides a ligand contact to ATP. 56 to 59 (DVRN) contributes to the GTP binding site. Residues 266-284 (RSRGKNVQSRHRTLEKRKS) are RNA-binding.

It belongs to the RapZ-like family. RapZ subfamily. Homotrimer.

In terms of biological role, modulates the synthesis of GlmS, by affecting the processing and stability of the regulatory small RNA GlmZ. When glucosamine-6-phosphate (GlcN6P) concentrations are high in the cell, RapZ binds GlmZ and targets it to cleavage by RNase E. Consequently, GlmZ is inactivated and unable to activate GlmS synthesis. Under low GlcN6P concentrations, RapZ is sequestered and inactivated by an other regulatory small RNA, GlmY, preventing GlmZ degradation and leading to synthesis of GlmS. The polypeptide is RNase adapter protein RapZ (Cronobacter sakazakii (strain ATCC BAA-894) (Enterobacter sakazakii)).